The primary structure comprises 186 residues: GTP cyclohydrolase 1 (186 aa).

Zn(2+) contacts are provided by C78, H81, and C150.

It belongs to the GTP cyclohydrolase I family. Toroid-shaped homodecamer, composed of two pentamers of five dimers.

The catalysed reaction is GTP + H2O = 7,8-dihydroneopterin 3'-triphosphate + formate + H(+). The protein operates within cofactor biosynthesis; 7,8-dihydroneopterin triphosphate biosynthesis; 7,8-dihydroneopterin triphosphate from GTP: step 1/1. The protein is GTP cyclohydrolase 1 of Enterococcus faecalis (strain ATCC 700802 / V583).